We begin with the raw amino-acid sequence, 189 residues long: Small ribosomal subunit protein uS7 (189 aa).

Belongs to the universal ribosomal protein uS7 family. In terms of assembly, part of the 30S ribosomal subunit.

Functionally, one of the primary rRNA binding proteins, it binds directly to 16S rRNA where it nucleates assembly of the head domain of the 30S subunit. Is located at the subunit interface close to the decoding center. This chain is Small ribosomal subunit protein uS7, found in Methanosarcina acetivorans (strain ATCC 35395 / DSM 2834 / JCM 12185 / C2A).